Reading from the N-terminus, the 288-residue chain is uncharacterized protein (288 aa).

This is an uncharacterized protein from Acanthamoeba polyphaga mimivirus (APMV).